The primary structure comprises 521 residues: Bifunctional purine biosynthesis protein PurH (521 aa).

The MGS-like domain maps to 1–147; sequence MAVIKRALIS…KNNRDVTVVV (147 aa).

The protein belongs to the PurH family.

It carries out the reaction (6R)-10-formyltetrahydrofolate + 5-amino-1-(5-phospho-beta-D-ribosyl)imidazole-4-carboxamide = 5-formamido-1-(5-phospho-D-ribosyl)imidazole-4-carboxamide + (6S)-5,6,7,8-tetrahydrofolate. The enzyme catalyses IMP + H2O = 5-formamido-1-(5-phospho-D-ribosyl)imidazole-4-carboxamide. The protein operates within purine metabolism; IMP biosynthesis via de novo pathway; 5-formamido-1-(5-phospho-D-ribosyl)imidazole-4-carboxamide from 5-amino-1-(5-phospho-D-ribosyl)imidazole-4-carboxamide (10-formyl THF route): step 1/1. It participates in purine metabolism; IMP biosynthesis via de novo pathway; IMP from 5-formamido-1-(5-phospho-D-ribosyl)imidazole-4-carboxamide: step 1/1. The chain is Bifunctional purine biosynthesis protein PurH from Syntrophotalea carbinolica (strain DSM 2380 / NBRC 103641 / GraBd1) (Pelobacter carbinolicus).